Reading from the N-terminus, the 290-residue chain is HTH-type transcriptional regulator BsdA (290 aa).

Residues 1 to 59 (MDIRQLRYFITIAQEQKITSAAKKLHMAQPPLSRQLKQLEDELGVVLFDRNKKKQMTLT) enclose the HTH lysR-type domain. Positions 18–37 (ITSAAKKLHMAQPPLSRQLK) form a DNA-binding region, H-T-H motif.

This sequence belongs to the LysR transcriptional regulatory family.

Functionally, could be a positive regulator of bsdBCD expression in response to salicylic acid. In Bacillus subtilis (strain 168), this protein is HTH-type transcriptional regulator BsdA (bsdA).